The sequence spans 592 residues: Malic enzyme, hydrogenosomal (592 aa).

The N-terminal 27 residues, 1–27 (MLAPIQTIARPVSSILPATGALAAKRT), are a transit peptide targeting the hydrogenosome. Residue Y134 is the Proton donor of the active site. NADP(+) is bound at residue 182–205 (VTDGSRILGLGDLGAGGMQIPIGK). Residue R187 participates in NAD(+) binding. The active-site Proton acceptor is the K205. E276, D277, and D300 together coordinate a divalent metal cation. D300 lines the NAD(+) pocket. 335-352 (GAGSSGVGVCETIVDCIV) provides a ligand contact to NADP(+). N443 contacts NAD(+).

It belongs to the malic enzymes family. It depends on Mg(2+) as a cofactor. Mn(2+) is required as a cofactor.

The protein resides in the hydrogenosome. The enzyme catalyses (S)-malate + NADP(+) = pyruvate + CO2 + NADPH. It catalyses the reaction oxaloacetate + H(+) = pyruvate + CO2. The polypeptide is Malic enzyme, hydrogenosomal (Neocallimastix frontalis (Rumen fungus)).